The sequence spans 117 residues: Large ribosomal subunit protein uL18 (117 aa).

It belongs to the universal ribosomal protein uL18 family. Part of the 50S ribosomal subunit; part of the 5S rRNA/L5/L18/L25 subcomplex. Contacts the 5S and 23S rRNAs.

Functionally, this is one of the proteins that bind and probably mediate the attachment of the 5S RNA into the large ribosomal subunit, where it forms part of the central protuberance. In Aster yellows witches'-broom phytoplasma (strain AYWB), this protein is Large ribosomal subunit protein uL18.